A 333-amino-acid chain; its full sequence is Oxidoreductase AN1596 (333 aa).

It belongs to the NmrA-type oxidoreductase family.

Its pathway is secondary metabolite biosynthesis; terpenoid biosynthesis. Its function is as follows. Oxidoreductase; part of the gene cluster that mediates the biosynthesis of the diterpene ent-pimara-8(14),15-diene (PD). Within the cluster, the HMG-CoA reductase AN1593 functions in the mevalonate pathway, which produces isoprenoid precursors. The geranylgeranyl pyrophosphate (GGPP) synthase AN1592 is needed in the formation of GGPP, the precursor for diterpenes. Lastly, the pimaradiene synthase pbcA performs the 2 cyclization steps that convert GGPP to ent-pimara-8(14),15-diene. The putative roles of the remaining cluster enzymes in ent-pimara-8(14),15-diene biosynthesis is unclear. The cytochrome P450 monooxygenase AN1598, the glutathione S-transferase AN1595, the oxidoreductases AN1596 and AN1597 probably function as decorative enzymes. It is possible that in biological conditions the compound is oxidized to ent-pimara-8(14),15-dien-19-oic acid, which is a bioactive diterpene compound predominant in many plant extracts. The protein is Oxidoreductase AN1596 of Emericella nidulans (strain FGSC A4 / ATCC 38163 / CBS 112.46 / NRRL 194 / M139) (Aspergillus nidulans).